We begin with the raw amino-acid sequence, 1304 residues long: Splicing factor 3B subunit 1 (1304 aa).

Disordered stretches follow at residues 100 to 119 (QYDP…EDEY) and 124 to 148 (RTMI…PKMN). The segment covering 104–119 (FAEHRPPKIADREDEY) has biased composition (basic and acidic residues). Residue T125 is modified to Phosphothreonine. At S129 the chain carries Phosphoserine. Position 141 is an N6-acetyllysine (K141). Residue T142 is modified to Phosphothreonine. Position 157 is a citrulline (R157). The tract at residues 172–360 (LAEKAKAGEL…PVLTPGKTPI (189 aa)) is disordered. S194 carries the phosphoserine modification. 3 positions are modified to phosphothreonine: T203, T207, and T211. K214 bears the N6-acetyllysine; alternate mark. K214 participates in a covalent cross-link: Glycyl lysine isopeptide (Lys-Gly) (interchain with G-Cter in SUMO2); alternate. Residues T223 and T227 each carry the phosphothreonine modification. Positions 223-491 (TPGHTPSLRW…VDESTLSPEE (269 aa)) are interaction with PPP1R8. Position 229 is a phosphoserine (S229). The segment covering 231 to 241 (RWDETPGRAKG) has biased composition (basic and acidic residues). Residues T235, T244, T248, T257, T261, T267, T273, and T278 each carry the phosphothreonine modification. A Phosphoserine modification is found at S287. Basic and acidic residues predominate over residues 291-304 (NRWDETPKTERDTP). 4 positions are modified to phosphothreonine: T296, T299, T303, and T313. S322 carries the post-translational modification Phosphoserine. Phosphothreonine is present on residues T326 and T328. S332 bears the Phosphoserine mark. Position 341 is a phosphothreonine (T341). Over residues 342–352 (PASQMGGSTPV) the composition is skewed to polar residues. Phosphoserine is present on residues S344 and S349. T350 and T354 each carry phosphothreonine. The residue at position 400 (S400) is a Phosphoserine. K413 participates in a covalent cross-link: Glycyl lysine isopeptide (Lys-Gly) (interchain with G-Cter in SUMO2); alternate. A Glycyl lysine isopeptide (Lys-Gly) (interchain with G-Cter in SUMO1); alternate cross-link involves residue K413. The residue at position 426 (T426) is a Phosphothreonine. A Glycyl lysine isopeptide (Lys-Gly) (interchain with G-Cter in SUMO2) cross-link involves residue K430. Phosphothreonine; by DYRK1A is present on T434. T436 bears the Phosphothreonine mark. S488 carries the phosphoserine modification. HEAT repeat units follow at residues 529–568 (GPLF…DLVR), 569–603 (PYVH…LAKA), 604–641 (AGLA…ALGI), 643–677 (SLLP…LMGC), 680–718 (LPHL…AATP), 763–801 (NYYT…TDGV), 843–881 (KVGA…NLGA), 1010–1048 (TPPI…RGAE), 1052–1090 (AREW…AIGP), 1122–1160 (TCSP…YIGE), and 1163–1201 (KDYI…GVYG). The interval 547–550 (QERH) is interaction with PHF5A. K554 and K562 each carry N6-acetyllysine. The segment at 1156 to 1157 (EY) is interaction with PHF5A. The tract at residues 1248-1304 (QYCLQGLFHPARKVRDVYWKIYNSIYIGSQDALIAHYPRIYNDDKNTYIRYDLDYIL) is interaction with SF3B3 and SF3B5.

Belongs to the SF3B1 family. As to quaternary structure, component of the 17S U2 SnRNP complex, a ribonucleoprotein complex that contains small nuclear RNA (snRNA) U2 and a number of specific proteins. Part of the SF3B subcomplex of the 17S U2 SnRNP complex. SF3B associates with the splicing subcomplex SF3A and a 12S RNA unit to form the U2 small nuclear ribonucleoproteins complex (U2 snRNP). Within the SF3B complex, interacts directly (via HEAT domain) with SF3B3, SF3B5, SF3B6 and (via HEAT domain) with PHF5A. The SF3B subcomplex interacts with U2AF2. Identified in the spliceosome C complex. Component of the minor (U12-type spliceosome) spliceosome. Within the minor spliceosome complex, interacts with SCNM1 and CRIPT. Component of the B-WICH complex, at least composed of SMARCA5/SNF2H, BAZ1B/WSTF, SF3B1, DEK, MYO1C, ERCC6, MYBBP1A and DDX21. Phosphorylated form interacts with PPP1R8. Interacts with PQBP1. Interacts with RBM17. Interacts with RBM39. Interacts with SETX. Interacts with RBM15. Interacts with USH1G. Interacts with SDE2. Interacts with U2AF1. Interacts with CACTIN. Interacts with ZRSR1. Interacts with CYREN. Phosphorylated. Phosphorylation occurs concomitantly with the splicing catalytic steps. Phosphorylation on Thr-244, Thr-248 and Thr-313 by cyclin-dependent kinases promotes interaction with PPP1R8 during mitosis. In terms of processing, citrullinated by PADI4. In terms of tissue distribution, ubiquitous.

Its subcellular location is the nucleus. The protein localises to the nucleus speckle. Functionally, component of the 17S U2 SnRNP complex of the spliceosome, a large ribonucleoprotein complex that removes introns from transcribed pre-mRNAs. The 17S U2 SnRNP complex (1) directly participates in early spliceosome assembly and (2) mediates recognition of the intron branch site during pre-mRNA splicing by promoting the selection of the pre-mRNA branch-site adenosine, the nucleophile for the first step of splicing. Within the 17S U2 SnRNP complex, SF3B1 is part of the SF3B subcomplex, which is required for 'A' complex assembly formed by the stable binding of U2 snRNP to the branchpoint sequence in pre-mRNA. Sequence independent binding of SF3A and SF3B subcomplexes upstream of the branch site is essential, it may anchor U2 snRNP to the pre-mRNA. May also be involved in the assembly of the 'E' complex. Also acts as a component of the minor spliceosome, which is involved in the splicing of U12-type introns in pre-mRNAs. Together with other U2 snRNP complex components may also play a role in the selective processing of microRNAs (miRNAs) from the long primary miRNA transcript, pri-miR-17-92. This is Splicing factor 3B subunit 1 from Mus musculus (Mouse).